Consider the following 469-residue polypeptide: Uronate isomerase (469 aa).

It belongs to the metallo-dependent hydrolases superfamily. Uronate isomerase family.

It carries out the reaction D-glucuronate = D-fructuronate. The catalysed reaction is aldehydo-D-galacturonate = keto-D-tagaturonate. The protein operates within carbohydrate metabolism; pentose and glucuronate interconversion. The chain is Uronate isomerase from Pectobacterium atrosepticum (strain SCRI 1043 / ATCC BAA-672) (Erwinia carotovora subsp. atroseptica).